Reading from the N-terminus, the 343-residue chain is Dihydroorotase (343 aa).

Zn(2+) is bound by residues H13 and H15. Residues 15–17 (HLR) and N41 contribute to the substrate site. K99, H136, and H174 together coordinate Zn(2+). Residue K99 is modified to N6-carboxylysine. H136 lines the substrate pocket. L219 provides a ligand contact to substrate. Zn(2+) is bound at residue D247. Residue D247 is part of the active site. H251 and A263 together coordinate substrate.

Belongs to the metallo-dependent hydrolases superfamily. DHOase family. Class II DHOase subfamily. In terms of assembly, homodimer. Requires Zn(2+) as cofactor.

The enzyme catalyses (S)-dihydroorotate + H2O = N-carbamoyl-L-aspartate + H(+). It participates in pyrimidine metabolism; UMP biosynthesis via de novo pathway; (S)-dihydroorotate from bicarbonate: step 3/3. Catalyzes the reversible cyclization of carbamoyl aspartate to dihydroorotate. The protein is Dihydroorotase of Shewanella sp. (strain ANA-3).